We begin with the raw amino-acid sequence, 876 residues long: uncharacterized protein (876 aa).

Residues 37–48 (DEDKSNNDDRRS) are compositionally biased toward basic and acidic residues. Disordered stretches follow at residues 37–67 (DEDK…KGSN), 112–155 (DESG…RNIK), 226–254 (KKKS…TKSQ), and 330–353 (MMMD…SRSI). 2 positions are modified to phosphoserine: Ser48 and Ser51. Low complexity predominate over residues 49–58 (LASILDSSSS). Polar residues predominate over residues 115 to 131 (GFTSDNNADYFSGNSYS). 4 positions are modified to phosphoserine: Ser360, Ser510, Ser552, and Ser577. Positions 490–513 (PEVTKQKNTSGPKPGFSHSKSADA) are disordered. Disordered regions lie at residues 661-728 (ITGG…RSPQ) and 750-876 (RHSL…FGRL). Positions 689–699 (SKSKSRSSSKS) are enriched in basic residues. A compositionally biased stretch (low complexity) spans 717 to 726 (SSASASRSRS). Ser775 bears the Phosphoserine mark. Composition is skewed to low complexity over residues 794 to 808 (NKDS…SSSL) and 842 to 854 (FSFF…SPSS).

This is an uncharacterized protein from Saccharomyces cerevisiae (strain ATCC 204508 / S288c) (Baker's yeast).